Consider the following 324-residue polypeptide: o-succinylbenzoate synthase (324 aa).

Catalysis depends on K135, which acts as the Proton donor. Mg(2+) contacts are provided by D163, E192, and D215. K237 (proton acceptor) is an active-site residue.

It belongs to the mandelate racemase/muconate lactonizing enzyme family. MenC type 1 subfamily. A divalent metal cation is required as a cofactor.

The catalysed reaction is (1R,6R)-6-hydroxy-2-succinyl-cyclohexa-2,4-diene-1-carboxylate = 2-succinylbenzoate + H2O. The protein operates within quinol/quinone metabolism; 1,4-dihydroxy-2-naphthoate biosynthesis; 1,4-dihydroxy-2-naphthoate from chorismate: step 4/7. It functions in the pathway quinol/quinone metabolism; menaquinone biosynthesis. Converts 2-succinyl-6-hydroxy-2,4-cyclohexadiene-1-carboxylate (SHCHC) to 2-succinylbenzoate (OSB). The polypeptide is o-succinylbenzoate synthase (Aliivibrio fischeri (strain ATCC 700601 / ES114) (Vibrio fischeri)).